We begin with the raw amino-acid sequence, 188 residues long: Elongation factor P (188 aa).

This sequence belongs to the elongation factor P family.

It localises to the cytoplasm. The protein operates within protein biosynthesis; polypeptide chain elongation. In terms of biological role, involved in peptide bond synthesis. Stimulates efficient translation and peptide-bond synthesis on native or reconstituted 70S ribosomes in vitro. Probably functions indirectly by altering the affinity of the ribosome for aminoacyl-tRNA, thus increasing their reactivity as acceptors for peptidyl transferase. In Aeromonas salmonicida (strain A449), this protein is Elongation factor P.